The following is a 107-amino-acid chain: Latency-related protein 2 (107 aa).

A compositionally biased stretch (pro residues) spans 1–44 (MAPPLPRTPTPTHPHSHAPPLPRTPTPAHPHSHAPPLPRTPTPT). Residues 1-63 (MAPPLPRTPT…SIQHRQGKDT (63 aa)) form a disordered region. 3 consecutive repeat copies span residues 2-17 (APPLPRTPTPTHPHSH), 18-33 (APPLPRTPTPAHPHSH), and 34-49 (APPLPRTPTPTHPHSH). Residues 2-49 (APPLPRTPTPTHPHSHAPPLPRTPTPAHPHSHAPPLPRTPTPTHPHSH) are 3 X 17 AA tandem repeats. Residues 46–58 (PHSHAPPRSIQHR) show a composition bias toward basic residues.

The protein is Latency-related protein 2 of Homo sapiens (Human).